We begin with the raw amino-acid sequence, 354 residues long: Histidinol-phosphate aminotransferase (354 aa).

At K222 the chain carries N6-(pyridoxal phosphate)lysine.

It belongs to the class-II pyridoxal-phosphate-dependent aminotransferase family. Histidinol-phosphate aminotransferase subfamily. As to quaternary structure, homodimer. Pyridoxal 5'-phosphate serves as cofactor.

It catalyses the reaction L-histidinol phosphate + 2-oxoglutarate = 3-(imidazol-4-yl)-2-oxopropyl phosphate + L-glutamate. Its pathway is amino-acid biosynthesis; L-histidine biosynthesis; L-histidine from 5-phospho-alpha-D-ribose 1-diphosphate: step 7/9. The sequence is that of Histidinol-phosphate aminotransferase from Staphylococcus carnosus (strain TM300).